The following is a 453-amino-acid chain: UPF0210 protein Pcar_2119 (453 aa).

The protein belongs to the UPF0210 family. Homodimer.

The protein is UPF0210 protein Pcar_2119 of Syntrophotalea carbinolica (strain DSM 2380 / NBRC 103641 / GraBd1) (Pelobacter carbinolicus).